The primary structure comprises 155 residues: SsrA-binding protein (155 aa).

This sequence belongs to the SmpB family.

Its subcellular location is the cytoplasm. Its function is as follows. Required for rescue of stalled ribosomes mediated by trans-translation. Binds to transfer-messenger RNA (tmRNA), required for stable association of tmRNA with ribosomes. tmRNA and SmpB together mimic tRNA shape, replacing the anticodon stem-loop with SmpB. tmRNA is encoded by the ssrA gene; the 2 termini fold to resemble tRNA(Ala) and it encodes a 'tag peptide', a short internal open reading frame. During trans-translation Ala-aminoacylated tmRNA acts like a tRNA, entering the A-site of stalled ribosomes, displacing the stalled mRNA. The ribosome then switches to translate the ORF on the tmRNA; the nascent peptide is terminated with the 'tag peptide' encoded by the tmRNA and targeted for degradation. The ribosome is freed to recommence translation, which seems to be the essential function of trans-translation. The chain is SsrA-binding protein from Bordetella bronchiseptica (strain ATCC BAA-588 / NCTC 13252 / RB50) (Alcaligenes bronchisepticus).